We begin with the raw amino-acid sequence, 202 residues long: Glycerol-3-phosphate acyltransferase (202 aa).

4 helical membrane-spanning segments follow: residues 2–22, 80–100, 119–139, and 158–178; these read ANLL…AVVV, LNET…LFPV, AIDP…AFFF, and VLMN…VLLI.

Belongs to the PlsY family. In terms of assembly, probably interacts with PlsX.

It localises to the cell inner membrane. The enzyme catalyses an acyl phosphate + sn-glycerol 3-phosphate = a 1-acyl-sn-glycero-3-phosphate + phosphate. It functions in the pathway lipid metabolism; phospholipid metabolism. In terms of biological role, catalyzes the transfer of an acyl group from acyl-phosphate (acyl-PO(4)) to glycerol-3-phosphate (G3P) to form lysophosphatidic acid (LPA). This enzyme utilizes acyl-phosphate as fatty acyl donor, but not acyl-CoA or acyl-ACP. The sequence is that of Glycerol-3-phosphate acyltransferase from Cupriavidus necator (strain ATCC 17699 / DSM 428 / KCTC 22496 / NCIMB 10442 / H16 / Stanier 337) (Ralstonia eutropha).